The chain runs to 294 residues: Glyceraldehyde-3-phosphate dehydrogenase (294 aa).

NAD(+) is bound by residues Asp-19, Lys-63, and Thr-105. Residues 134–136 (SCT), Thr-165, 194–195 (TG), and Arg-217 each bind D-glyceraldehyde 3-phosphate. Catalysis depends on Cys-135, which acts as the Nucleophile.

This sequence belongs to the glyceraldehyde-3-phosphate dehydrogenase family. As to quaternary structure, homotetramer.

The protein resides in the cytoplasm. The enzyme catalyses D-glyceraldehyde 3-phosphate + phosphate + NAD(+) = (2R)-3-phospho-glyceroyl phosphate + NADH + H(+). It participates in carbohydrate degradation; glycolysis; pyruvate from D-glyceraldehyde 3-phosphate: step 1/5. Its function is as follows. Catalyzes the oxidative phosphorylation of glyceraldehyde 3-phosphate (G3P) to 1,3-bisphosphoglycerate (BPG) using the cofactor NAD. The first reaction step involves the formation of a hemiacetal intermediate between G3P and a cysteine residue, and this hemiacetal intermediate is then oxidized to a thioester, with concomitant reduction of NAD to NADH. The reduced NADH is then exchanged with the second NAD, and the thioester is attacked by a nucleophilic inorganic phosphate to produce BPG. The sequence is that of Glyceraldehyde-3-phosphate dehydrogenase (gap) from Klebsiella aerogenes (Enterobacter aerogenes).